Reading from the N-terminus, the 502-residue chain is MTEKKYIVALDQGTTSSRAVVMDHDANIVSVSQREFEQIYPKPGWVEHDPMEIWASQSSTLVEVLAKADISSDQIAAIGITNQRETAIVWERETGKPIYNAIVWQCRRTADICEQLKRDGLEDYIRDNTGLVVDPYFSGTKVKWILDHVEGSRERAKRGELLFGTVDTWLIWKMTQGRVHVTDYTNASRTMLFNIHDLDWDDKMLDVLDIPRAMLPQVRKSSEVYGQTNIGGKGGTRIPIAGIAGDQQAALFGQLCVKEGMAKNTYGTGCFMLMNTGEKAVKSENGLLITIACGPSGEVNYALEGAVFMAGASIQWLRDEMKLISDAFDSEYFATKVKDTNGVYVVPAFTGLGAPYWDPYARGAIFGLTRGVNSNHIIRATLESIAYQTRDVLEAMQADSGIRLHALRVDGGAVANNFLMQFQSDILGTRVERPEVREVTALGAAYLAGLAVGYWQNLDELQEKAVIEREFRPGIETTERNYRYSGWKKAVKRAMAWEEHDK.

Threonine 14 is an ADP binding site. 3 residues coordinate ATP: threonine 14, threonine 15, and serine 16. Sn-glycerol 3-phosphate is bound at residue threonine 14. Arginine 18 serves as a coordination point for ADP. Residues arginine 84, glutamate 85, tyrosine 136, and aspartate 246 each contribute to the sn-glycerol 3-phosphate site. Positions 84, 85, 136, 246, and 247 each coordinate glycerol. The ADP site is built by threonine 268 and glycine 311. Positions 268, 311, 315, and 412 each coordinate ATP. ADP is bound by residues glycine 412 and asparagine 416.

The protein belongs to the FGGY kinase family. Homotetramer and homodimer (in equilibrium). Heterodimer with EIIA-Glc. Binds 1 zinc ion per glycerol kinase EIIA-Glc dimer. The zinc ion is important for dimerization.

It catalyses the reaction glycerol + ATP = sn-glycerol 3-phosphate + ADP + H(+). The protein operates within polyol metabolism; glycerol degradation via glycerol kinase pathway; sn-glycerol 3-phosphate from glycerol: step 1/1. Its activity is regulated as follows. Activity of this regulatory enzyme is affected by several metabolites. Allosterically and non-competitively inhibited by fructose 1,6-bisphosphate (FBP) and unphosphorylated phosphocarrier protein EIIA-Glc (III-Glc), an integral component of the bacterial phosphotransferase (PTS) system. Key enzyme in the regulation of glycerol uptake and metabolism. Catalyzes the phosphorylation of glycerol to yield sn-glycerol 3-phosphate. The protein is Glycerol kinase of Salmonella typhimurium (strain LT2 / SGSC1412 / ATCC 700720).